The following is a 681-amino-acid chain: Sorting nexin-41 (681 aa).

A compositionally biased stretch (acidic residues) spans 1 to 12; sequence MSTDNLFEDIEQ. A disordered region spans residues 1-94; the sequence is MSTDNLFEDI…HNTSLNNGYP (94 aa). The span at 13-24 shows a compositional bias: polar residues; that stretch reads DNNPSFYGNPSI. The PX domain occupies 113–236; the sequence is NDSQLQVDII…KFFDPNYELC (124 aa). Residues Arg-151, Ser-153, Lys-177, and Arg-200 each coordinate a 1,2-diacyl-sn-glycero-3-phospho-(1D-myo-inositol-3-phosphate). Disordered regions lie at residues 475 to 505 and 558 to 597; these read LASRISTDNDSNNSNNSGNNNNDGDLDTENF and TATGSTEQQSQQQSAPNSPQREQQQQQSQSQSHHSHQTSI. 2 stretches are compositionally biased toward low complexity: residues 482 to 497 and 558 to 589; these read DNDSNNSNNSGNNNND and TATGSTEQQSQQQSAPNSPQREQQQQQSQSQS.

This sequence belongs to the sorting nexin family.

It is found in the endosome membrane. The protein localises to the endomembrane system. In terms of biological role, may be required for cytoplasm to vacuole transport (Cvt) and pexophagy. This chain is Sorting nexin-41 (SNX41), found in Candida albicans (strain SC5314 / ATCC MYA-2876) (Yeast).